The following is a 281-amino-acid chain: Probable endonuclease 4 (281 aa).

Zn(2+) contacts are provided by His69, His109, Glu145, Asp179, His182, His216, Asp229, His231, and Glu261.

The protein belongs to the AP endonuclease 2 family. Zn(2+) is required as a cofactor.

The catalysed reaction is Endonucleolytic cleavage to 5'-phosphooligonucleotide end-products.. Functionally, endonuclease IV plays a role in DNA repair. It cleaves phosphodiester bonds at apurinic or apyrimidinic (AP) sites, generating a 3'-hydroxyl group and a 5'-terminal sugar phosphate. This Parabacteroides distasonis (strain ATCC 8503 / DSM 20701 / CIP 104284 / JCM 5825 / NCTC 11152) protein is Probable endonuclease 4.